A 129-amino-acid polypeptide reads, in one-letter code: Transcription antitermination protein NusB (129 aa).

The protein belongs to the NusB family.

Functionally, involved in transcription antitermination. Required for transcription of ribosomal RNA (rRNA) genes. Binds specifically to the boxA antiterminator sequence of the ribosomal RNA (rrn) operons. The sequence is that of Transcription antitermination protein NusB from Staphylococcus epidermidis (strain ATCC 35984 / DSM 28319 / BCRC 17069 / CCUG 31568 / BM 3577 / RP62A).